The sequence spans 731 residues: DNA ligase (731 aa).

Residues 59–63 (DSEYD), 108–109 (SL), and glutamate 142 each bind NAD(+). Lysine 144 (N6-AMP-lysine intermediate) is an active-site residue. NAD(+) contacts are provided by arginine 165, glutamate 202, lysine 318, and lysine 342. Cysteine 434, cysteine 437, cysteine 452, and cysteine 458 together coordinate Zn(2+). A BRCT domain is found at 645–731 (LASSPLSGKI…ENDGQDSIKI (87 aa)).

It belongs to the NAD-dependent DNA ligase family. LigA subfamily. Mg(2+) serves as cofactor. The cofactor is Mn(2+).

It carries out the reaction NAD(+) + (deoxyribonucleotide)n-3'-hydroxyl + 5'-phospho-(deoxyribonucleotide)m = (deoxyribonucleotide)n+m + AMP + beta-nicotinamide D-nucleotide.. Functionally, DNA ligase that catalyzes the formation of phosphodiester linkages between 5'-phosphoryl and 3'-hydroxyl groups in double-stranded DNA using NAD as a coenzyme and as the energy source for the reaction. It is essential for DNA replication and repair of damaged DNA. This is DNA ligase from Zymomonas mobilis subsp. mobilis (strain ATCC 31821 / ZM4 / CP4).